The following is a 217-amino-acid chain: 3,4-dihydroxy-2-butanone 4-phosphate synthase (217 aa).

D-ribulose 5-phosphate is bound by residues 37–38 (RE), D42, 150–154 (RRGHT), and E174. A Mg(2+)-binding site is contributed by E38. Residue H153 participates in Mg(2+) binding.

It belongs to the DHBP synthase family. Homodimer. The cofactor is Mg(2+). Mn(2+) serves as cofactor.

It catalyses the reaction D-ribulose 5-phosphate = (2S)-2-hydroxy-3-oxobutyl phosphate + formate + H(+). It functions in the pathway cofactor biosynthesis; riboflavin biosynthesis; 2-hydroxy-3-oxobutyl phosphate from D-ribulose 5-phosphate: step 1/1. Catalyzes the conversion of D-ribulose 5-phosphate to formate and 3,4-dihydroxy-2-butanone 4-phosphate. This is 3,4-dihydroxy-2-butanone 4-phosphate synthase from Shewanella sp. (strain W3-18-1).